A 210-amino-acid polypeptide reads, in one-letter code: MAFENLKISRHISSSTKNLLKAKKIMAALASNPQMLTRQAHGNKKEQLWRKESLNLEKKCGFCVSVYSNEKLGRSHMEKEWRLKAFWSNIAQPTTLEMEPINNVEELDAVLSHARQLSQPIIIEWMASWCRKCIYLKPKLEKLAAEYNNRAKFYYVDVNKVPQTLVKRGNISKMPTIQLWKEDEMKEEVIGGHKGWLVIEEVRELINKFV.

One can recognise a Thioredoxin domain in the interval 81-210; that stretch reads WRLKAFWSNI…EVRELINKFV (130 aa). Active-site nucleophile residues include Cys-130 and Cys-133. Cysteines 130 and 133 form a disulfide.

It belongs to the thioredoxin family.

Its subcellular location is the plastid. The protein resides in the chloroplast stroma. In terms of biological role, probable thiol-disulfide oxidoreductase that may participate in various redox reactions. The polypeptide is Thioredoxin-like 3-1, chloroplastic (WCRKC1) (Arabidopsis thaliana (Mouse-ear cress)).